A 521-amino-acid chain; its full sequence is Forkhead box protein N4 (521 aa).

Residues 197–293 constitute a DNA-binding region (fork-head); that stretch reads KPIYSYSCLI…EEMHKWKRKD (97 aa). The segment at 371 to 406 is disordered; it reads PQAHLAPDSPAPAQTPPLHALPSLSPGPLPQPAMGR.

Mainly expressed in proliferator progenitor cells in brain and retina rather than differentiated cells. In contrast, is expressed only in postmitotic epithelial cells rather than in proliferative progenitors in the proximal airway.

Its subcellular location is the nucleus. Functionally, transcription factor essential for neural and some non-neural tissues development, such as retina and lung respectively. Binds to an 11-bp consensus sequence containing the invariant tetranucleotide 5'-ACGC-3'. During development of the central nervous system, is required to specify the amacrine and horizontal cell fates from multipotent retinal progenitors while suppressing the alternative photoreceptor cell fates through activating DLL4-NOTCH signaling. Also acts synergistically with ASCL1/MASH1 to activate DLL4-NOTCH signaling and drive commitment of p2 progenitors to the V2b interneuron fates during spinal cord neurogenesis. In development of non-neural tissues, plays an essential role in the specification of the atrioventricular canal and is indirectly required for patterning the distal airway during lung development. The protein is Forkhead box protein N4 (Foxn4) of Mus musculus (Mouse).